Here is a 494-residue protein sequence, read N- to C-terminus: Flavin-containing monooxygenase ustF2 (494 aa).

The signal sequence occupies residues 1-21 (MANPQTTRVAVVGAGISGVLA). 13–18 (GAGISG) contacts FAD. Residues 73–93 (EPSYPAMKPSKADPPATNEQE) form a disordered region. 250-255 (GGGVSS) contributes to the NADP(+) binding site. An N-linked (GlcNAc...) asparagine glycan is attached at N459.

Belongs to the FMO family.

It participates in mycotoxin biosynthesis. Its function is as follows. Flavin-containing monooxygenase; part of the gene cluster that mediates the biosynthesis of the secondary metabolite ustiloxin B, an antimitotic tetrapeptide. First, ustA is processed by the subtilisin-like endoprotease Kex2 that is outside the ustiloxin B gene cluster, at the C-terminal side of Arg-Lys, after transfer to Golgi apparatus through the endoplasmic reticulum (ER). Cleavage by KEX2 generates 16 peptides YAIG-I to YAIG-XVI. To process the precursor peptide further, at least two peptidases are necessary to cleave the N-terminal and C-terminal sides of the Tyr-Ala-Ile-Gly core peptide which serves as backbone for the synthesis of ustiloxin B, through cyclization and modification of the tyrosine with a non-protein coding amino acid, norvaline. One of the two peptidases must be the serine peptidase ustP; and the other pepdidase is probably ustH. Macrocyclization of the core peptide derived from ustA requires the tyrosinase ustQ, as well as the homologous oxidases ustYa and ustYb, and leads to the production of the first cyclization product N-desmethylustiloxin F. For the formation of N-desmethylustiloxin F, three oxidation steps are required, hydroxylation at the benzylic position, hydroxylation at either the aromatic ring of Tyr or beta-position of Ile, and oxidative cyclization. UstQ may catalyze the oxidation of a phenol moiety, whereas the ustYa and ustYb are most likely responsible for the remaining two-step oxidations. N-desmethylustiloxin F is then methylated by ustM to yield ustiloxin F which in turn substrate of the cytochrome P450 monooxygenase ustC which catalyzes the formation of S-deoxyustiloxin H. The flavoprotein monooxygenases ustF1 and ustF2 then participate in the modification of the side chain of S-deoxyustiloxin H, leading to the synthesis of an oxime intermediate, via ustiloxin H. Finally, carboxylative dehydration performed by the cysteine desulfurase-like protein ustD yields ustiloxin B. This Aspergillus flavus (strain ATCC 200026 / FGSC A1120 / IAM 13836 / NRRL 3357 / JCM 12722 / SRRC 167) protein is Flavin-containing monooxygenase ustF2.